The primary structure comprises 303 residues: Mycothiol acetyltransferase (303 aa).

2 consecutive N-acetyltransferase domains span residues 4 to 141 and 154 to 303; these read ITVR…RSLA and IVLR…ANGA. Residue glutamate 38 coordinates 1D-myo-inositol 2-(L-cysteinylamino)-2-deoxy-alpha-D-glucopyranoside. Residue 80 to 82 coordinates acetyl-CoA; it reads AAV. 1D-myo-inositol 2-(L-cysteinylamino)-2-deoxy-alpha-D-glucopyranoside is bound by residues glutamate 181, lysine 223, and glutamate 234. Acetyl-CoA-binding positions include 238 to 240 and 245 to 251; these read VGI and QGRGLGR. A 1D-myo-inositol 2-(L-cysteinylamino)-2-deoxy-alpha-D-glucopyranoside-binding site is contributed by tyrosine 272. Position 277–282 (277–282) interacts with acetyl-CoA; that stretch reads NTAAVN.

This sequence belongs to the acetyltransferase family. MshD subfamily. In terms of assembly, monomer.

The enzyme catalyses 1D-myo-inositol 2-(L-cysteinylamino)-2-deoxy-alpha-D-glucopyranoside + acetyl-CoA = mycothiol + CoA + H(+). Its function is as follows. Catalyzes the transfer of acetyl from acetyl-CoA to desacetylmycothiol (Cys-GlcN-Ins) to form mycothiol. This Nocardia farcinica (strain IFM 10152) protein is Mycothiol acetyltransferase.